The primary structure comprises 223 residues: Endonuclease V (223 aa).

2 residues coordinate Mg(2+): Asp35 and Asp103.

This sequence belongs to the endonuclease V family. Mg(2+) serves as cofactor.

The protein localises to the cytoplasm. It catalyses the reaction Endonucleolytic cleavage at apurinic or apyrimidinic sites to products with a 5'-phosphate.. Functionally, DNA repair enzyme involved in the repair of deaminated bases. Selectively cleaves double-stranded DNA at the second phosphodiester bond 3' to a deoxyinosine leaving behind the intact lesion on the nicked DNA. This chain is Endonuclease V, found in Salmonella paratyphi A (strain ATCC 9150 / SARB42).